A 170-amino-acid polypeptide reads, in one-letter code: ATP synthase subunit b (170 aa).

The chain crosses the membrane as a helical span at residues 11–31; it reads AFTFGDAFFTLFAFAILLVLI.

It belongs to the ATPase B chain family. In terms of assembly, F-type ATPases have 2 components, F(1) - the catalytic core - and F(0) - the membrane proton channel. F(1) has five subunits: alpha(3), beta(3), gamma(1), delta(1), epsilon(1). F(0) has three main subunits: a(1), b(2) and c(10-14). The alpha and beta chains form an alternating ring which encloses part of the gamma chain. F(1) is attached to F(0) by a central stalk formed by the gamma and epsilon chains, while a peripheral stalk is formed by the delta and b chains.

It localises to the cell membrane. Functionally, f(1)F(0) ATP synthase produces ATP from ADP in the presence of a proton or sodium gradient. F-type ATPases consist of two structural domains, F(1) containing the extramembraneous catalytic core and F(0) containing the membrane proton channel, linked together by a central stalk and a peripheral stalk. During catalysis, ATP synthesis in the catalytic domain of F(1) is coupled via a rotary mechanism of the central stalk subunits to proton translocation. Component of the F(0) channel, it forms part of the peripheral stalk, linking F(1) to F(0). This is ATP synthase subunit b from Listeria monocytogenes serotype 4b (strain F2365).